Here is a 273-residue protein sequence, read N- to C-terminus: Ribosomal RNA small subunit methyltransferase A (273 aa).

Positions 25, 27, 52, 73, 99, and 118 each coordinate S-adenosyl-L-methionine.

It belongs to the class I-like SAM-binding methyltransferase superfamily. rRNA adenine N(6)-methyltransferase family. RsmA subfamily.

It is found in the cytoplasm. The catalysed reaction is adenosine(1518)/adenosine(1519) in 16S rRNA + 4 S-adenosyl-L-methionine = N(6)-dimethyladenosine(1518)/N(6)-dimethyladenosine(1519) in 16S rRNA + 4 S-adenosyl-L-homocysteine + 4 H(+). Its function is as follows. Specifically dimethylates two adjacent adenosines (A1518 and A1519) in the loop of a conserved hairpin near the 3'-end of 16S rRNA in the 30S particle. May play a critical role in biogenesis of 30S subunits. In Novosphingobium aromaticivorans (strain ATCC 700278 / DSM 12444 / CCUG 56034 / CIP 105152 / NBRC 16084 / F199), this protein is Ribosomal RNA small subunit methyltransferase A.